The chain runs to 212 residues: tRNA(Phe) 7-((3-amino-3-carboxypropyl)-4-demethylwyosine(37)-N(4))-methyltransferase 2 (212 aa).

It belongs to the TYW3 family.

The catalysed reaction is 4-demethyl-7-[(3S)-3-amino-3-carboxypropyl]wyosine(37) in tRNA(Phe) + S-adenosyl-L-methionine = 7-[(3S)-3-amino-3-carboxypropyl]wyosine(37) in tRNA(Phe) + S-adenosyl-L-homocysteine + H(+). In terms of biological role, S-adenosyl-L-methionine-dependent methyltransferase that acts as a component of the wyosine derivatives biosynthesis pathway. Probably methylates N-4 position of wybutosine-86 to produce wybutosine-72. This Thermococcus kodakarensis (strain ATCC BAA-918 / JCM 12380 / KOD1) (Pyrococcus kodakaraensis (strain KOD1)) protein is tRNA(Phe) 7-((3-amino-3-carboxypropyl)-4-demethylwyosine(37)-N(4))-methyltransferase 2.